The chain runs to 978 residues: Calsyntenin-1 (978 aa).

Residues 1-26 (MTFHKTFGYGCIVLICFELLFAGVET) form the signal peptide. Residues 27–876 (SSENDDEYLT…SFIHKAEGSH (850 aa)) lie on the Extracellular side of the membrane. Cadherin domains are found at residues 37–143 (QKEI…APTF) and 144–249 (LEPS…MPER). An N-linked (GlcNAc...) asparagine glycan is attached at Asn-53. Asn-304, Asn-486, Asn-608, and Asn-823 each carry an N-linked (GlcNAc...) asparagine glycan. A helical membrane pass occupies residues 877–897 (VTMLIILVSVFLAVLLCGVSI). At 898-978 (ARLKNNQKYI…EWDNSNIFQQ (81 aa)) the chain is on the cytoplasmic side. The tract at residues 937–958 (ADVTSDASSESENSESEDEEAL) is disordered. A compositionally biased stretch (acidic residues) spans 948-957 (ENSESEDEEA).

It belongs to the calsyntenin family.

The protein resides in the postsynaptic cell membrane. In terms of biological role, postsynaptic adhesion molecule that binds to presynaptic neurexins to mediate both excitatory and inhibitory synapse formation. Promotes synapse development by acting as a cell adhesion molecule at the postsynaptic membrane, which associates with neurexin-alpha at the presynaptic membrane. The sequence is that of Calsyntenin-1 (Cals) from Drosophila melanogaster (Fruit fly).